Reading from the N-terminus, the 421-residue chain is Testin (421 aa).

Residues 92-199 (MILTNPVAAK…GDVKLPCEMD (108 aa)) enclose the PET domain. LIM zinc-binding domains lie at 234–297 (YSCY…CDSE), 299–359 (PRCA…NHAV), and 362–421 (QGCH…KRMS).

Belongs to the prickle / espinas / testin family. As to quaternary structure, interacts via LIM domain 1 with ZYX. Interacts (via LIM domain 3) with ENAH and VASP. Interacts with ALKBH4, talin, actin, alpha-actinin, GRIP1 and PXN. Interacts (via LIM domain 2) with ACTL7A (via N-terminus). Heterodimer with ACTL7A; the heterodimer interacts with ENAH to form a heterotrimer.

Its subcellular location is the cytoplasm. It localises to the cell junction. It is found in the focal adhesion. Scaffold protein that may play a role in cell adhesion, cell spreading and in the reorganization of the actin cytoskeleton. Plays a role in the regulation of cell proliferation. May act as a tumor suppressor. In Nomascus leucogenys (Northern white-cheeked gibbon), this protein is Testin (TES).